The following is a 427-amino-acid chain: Gustatory receptor for sugar taste 43a (427 aa).

The Cytoplasmic segment spans residues 1 to 37 (MEISQPSIGIFYISKVLALAPYATVRNSKGRVEIGRS). A helical membrane pass occupies residues 38-63 (WLFTVYSATLTVVMVFLTYRGLLFDA). The Extracellular segment spans residues 64-75 (NSEIPVRMKSAT). Positions 70 and 83 each coordinate beta-D-fructose. The helical transmembrane segment at 76–96 (SKVVTALDVSVVVMAIVSGVY) threads the bilayer. Residues 97–135 (CGLFSLNDTLELNDRLNKIDNTLNAYNNFRRDRWRALGM) are Cytoplasmic-facing. A helical membrane pass occupies residues 136–158 (AAVSLLAISILVGLDVGTWMRIA). Residues 159 to 168 (QDMNIAQSDT) are Extracellular-facing. A helical membrane pass occupies residues 169–193 (ELNVHWYIPFYSLYFILTGLQVNIA). Beta-D-fructose is bound at residue Tyr-182. At 194 to 293 (NTAYGLGRRF…CVHLLSNSFG (100 aa)) the chain is on the cytoplasmic side. Residues 294-316 (IAVLFILVSCLLHLVATAYFLFL) form a helical membrane-spanning segment. Thr-310 contributes to the beta-D-fructose binding site. The Extracellular portion of the chain corresponds to 317–324 (ELLSKRDN). A helical membrane pass occupies residues 325-346 (GYLWVQMLWICFHFLRLLMVVE). A beta-D-fructose-binding site is contributed by His-337. Topologically, residues 347-402 (PCHLAARESRKTIQIVCEIERKVHEPILAEAVKKFWQQLLVVDADFSACGLCRVNR) are cytoplasmic. A helical membrane pass occupies residues 403-423 (TILTSFASAIATYLVILIQFQ). A Ca(2+)-binding site is contributed by Gln-421. Residues 424 to 427 (RTNG) lie on the Extracellular side of the membrane.

The protein belongs to the insect chemoreceptor superfamily. Gustatory receptor (GR) family. Gr21a subfamily. As to quaternary structure, homotetramer. Expressed in the adult labellar chemosensory neurons and in the adult head, abdomen, leg and wing. In larvae, is expressed in taste organs, as well as the brain and the gastrointestinal system.

It localises to the cell membrane. Gustatory receptor which mediates acceptance or avoidance behavior, depending on its substrates. Gr43a is the main sugar receptor in larvae. Functions as a narrowly tuned fructose receptor in taste neurons but also as a fructose receptor in the brain. Necessary and sufficient to sense hemolymph fructose and promote feeding in hungry flies but suppress feeding in satiated flies. This Drosophila melanogaster (Fruit fly) protein is Gustatory receptor for sugar taste 43a (Gr43a).